The following is a 1310-amino-acid chain: Major viral transcription factor ICP4 homolog (1310 aa).

3 disordered regions span residues 117–271 (AGAR…GPVE), 285–454 (GAKA…TPII), and 636–697 (GSSP…LLDK). The segment covering 341–350 (PVEKKPKSRE) has biased composition (basic and acidic residues). 3 stretches are compositionally biased toward low complexity: residues 351-364 (FVSS…WGSS), 392-407 (PSPS…DGGS), and 648-666 (PSPT…SAAA). The short motif at 677 to 685 (RLRTPRKRK) is the Nuclear localization signal element. A phosphoserine; by viral VZV ORF66 mark is found at Ser-686 and Ser-722. Disordered stretches follow at residues 1193-1258 (GTRF…SFGV) and 1282-1310 (ELLS…QSRG). Basic and acidic residues predominate over residues 1217 to 1227 (RTADDREHALE). The segment covering 1228–1250 (LDDWEVGCEDAWDSEEGGGDDGD) has biased composition (acidic residues).

Belongs to the herpesviridae ICP4 family. Interacts with IE4 and IE63. Interacts with host USF1 and SP1. Phosphorylated by ORF66 protein kinase on Ser-686 and Ser-722. Also phosphorylated by ORF47 protein kinase and by human CSNK2A1/CKII.

Its subcellular location is the host nucleus. It is found in the host cytoplasm. The protein resides in the virion tegument. Transcriptional transactivator. May interact with and recruit specific components of the general transcription machinery to viral promoters and stabilize their formation for transcription initiation. Negatively regulates its own transcription. This immediate early (EI) protein may be necessary in virion for viral pathogenesis. The polypeptide is Major viral transcription factor ICP4 homolog (Homo sapiens (Human)).